Consider the following 225-residue polypeptide: NAD(P)H-quinone oxidoreductase subunit K, chloroplastic (225 aa).

Residues Cys-43, Cys-44, Cys-108, and Cys-139 each coordinate [4Fe-4S] cluster.

The protein belongs to the complex I 20 kDa subunit family. In terms of assembly, NDH is composed of at least 16 different subunits, 5 of which are encoded in the nucleus. The cofactor is [4Fe-4S] cluster.

It is found in the plastid. It localises to the chloroplast thylakoid membrane. The enzyme catalyses a plastoquinone + NADH + (n+1) H(+)(in) = a plastoquinol + NAD(+) + n H(+)(out). It catalyses the reaction a plastoquinone + NADPH + (n+1) H(+)(in) = a plastoquinol + NADP(+) + n H(+)(out). Its function is as follows. NDH shuttles electrons from NAD(P)H:plastoquinone, via FMN and iron-sulfur (Fe-S) centers, to quinones in the photosynthetic chain and possibly in a chloroplast respiratory chain. The immediate electron acceptor for the enzyme in this species is believed to be plastoquinone. Couples the redox reaction to proton translocation, and thus conserves the redox energy in a proton gradient. The polypeptide is NAD(P)H-quinone oxidoreductase subunit K, chloroplastic (Gossypium barbadense (Sea Island cotton)).